The chain runs to 227 residues: MELVFIRHGFSEWNAKNLFTGWRDVNLTERGVEEAKAAGQKLLAAGYEFDIAFTSVLTRAIKTCNIVLEESNQLWIPQVKHWRLNERHYGELQGLDKKATAEKYGDEQVHIWRRSYDTLPPLLAPSDPNSAHNDRRYAHLPKEVVPNGENLKVTLERVLPFWEDQIAPALLSGKRVLVTAHGNSLRALAKHIIGISDAEIMDFEIPTGQPLVLKLDSKLNFIEKFYL.

Residues 7-14 (RHGFSEWN), 20-21 (TG), R59, 86-89 (ERHY), K97, 113-114 (RR), and 182-183 (GN) contribute to the substrate site. The active-site Tele-phosphohistidine intermediate is the H8. E86 acts as the Proton donor/acceptor in catalysis.

Belongs to the phosphoglycerate mutase family. BPG-dependent PGAM subfamily. As to quaternary structure, homodimer.

The enzyme catalyses (2R)-2-phosphoglycerate = (2R)-3-phosphoglycerate. It functions in the pathway carbohydrate degradation; glycolysis; pyruvate from D-glyceraldehyde 3-phosphate: step 3/5. Functionally, catalyzes the interconversion of 2-phosphoglycerate and 3-phosphoglycerate. In Haemophilus ducreyi (strain 35000HP / ATCC 700724), this protein is 2,3-bisphosphoglycerate-dependent phosphoglycerate mutase.